The chain runs to 424 residues: Glycerol-3-phosphate dehydrogenase [NAD(+)] (424 aa).

NAD(+) contacts are provided by residues 79 to 84, phenylalanine 111, and phenylalanine 167; that span reads GSGNWG. Lysine 190 serves as a coordination point for substrate. An NAD(+)-binding site is contributed by alanine 223. Lysine 283 functions as the Proton acceptor in the catalytic mechanism. The NAD(+) site is built by arginine 348 and glutamine 377. 348-349 contributes to the substrate binding site; the sequence is RN.

The protein belongs to the NAD-dependent glycerol-3-phosphate dehydrogenase family.

It carries out the reaction sn-glycerol 3-phosphate + NAD(+) = dihydroxyacetone phosphate + NADH + H(+). The chain is Glycerol-3-phosphate dehydrogenase [NAD(+)] (GPD) from Eremothecium gossypii (strain ATCC 10895 / CBS 109.51 / FGSC 9923 / NRRL Y-1056) (Yeast).